We begin with the raw amino-acid sequence, 75 residues long: MKPKKIISNKAQISLELALLLGALVVAASIVGFYYLKSVTRGTSTAESISKNITLAAKNKALDNIYKVKRALNGQ.

Positions 1 to 11 (MKPKKIISNKA) are excised as a propeptide. The short motif at 12-20 (QISLELALL) is the QXSXEXXXL element.

Post-translationally, the N-terminus is cleaved by the prepilin peptidase EppA, which recognizes the class III signal sequence.

The protein localises to the secreted. It localises to the cell surface. Its subcellular location is the fimbrium. The protein is Probable pilin MJ1469 of Methanocaldococcus jannaschii (strain ATCC 43067 / DSM 2661 / JAL-1 / JCM 10045 / NBRC 100440) (Methanococcus jannaschii).